Reading from the N-terminus, the 399-residue chain is Serine palmitoyltransferase (399 aa).

Residues 113–114 (GF), His213, Thr241, and Ser243 contribute to the pyridoxal 5'-phosphate site. Lys244 carries the post-translational modification N6-(pyridoxal phosphate)lysine.

Belongs to the class-II pyridoxal-phosphate-dependent aminotransferase family. As to quaternary structure, homodimer. Pyridoxal 5'-phosphate is required as a cofactor.

The protein resides in the cytoplasm. It localises to the cell inner membrane. The catalysed reaction is L-serine + hexadecanoyl-CoA + H(+) = 3-oxosphinganine + CO2 + CoA. It functions in the pathway lipid metabolism; sphingolipid metabolism. Catalyzes the condensation of L-serine with palmitoyl-CoA (hexadecanoyl-CoA) to produce 3-oxosphinganine. Exhibits a broad substrate specificity concerning the chain length and the degree of unsaturation of acyl-CoA. In Sphingobacterium multivorum, this protein is Serine palmitoyltransferase.